A 520-amino-acid chain; its full sequence is Cholesterol side-chain cleavage enzyme, mitochondrial (520 aa).

The transit peptide at 1–39 (MLARGLPLRSALVKACPPILSTVGEGWGHHRVGTGEGAG) directs the protein to the mitochondrion. C461 serves as a coordination point for heme.

It belongs to the cytochrome P450 family. In terms of assembly, interacts with FDX1/adrenodoxin. It depends on heme as a cofactor. In terms of tissue distribution, detected in adrenal cortex and corpus luteum (at protein level).

The protein localises to the mitochondrion inner membrane. The catalysed reaction is 6 reduced [adrenodoxin] + cholesterol + 3 O2 + 6 H(+) = 4-methylpentanal + pregnenolone + 6 oxidized [adrenodoxin] + 4 H2O. It carries out the reaction 2 reduced [adrenodoxin] + cholesterol + O2 + 2 H(+) = (22R)-hydroxycholesterol + 2 oxidized [adrenodoxin] + H2O. The enzyme catalyses (22R)-hydroxycholesterol + 2 reduced [adrenodoxin] + O2 + 2 H(+) = (20R,22R)-20,22-dihydroxycholesterol + 2 oxidized [adrenodoxin] + H2O. It catalyses the reaction (20R,22R)-20,22-dihydroxycholesterol + 2 reduced [adrenodoxin] + O2 + 2 H(+) = 4-methylpentanal + pregnenolone + 2 oxidized [adrenodoxin] + 2 H2O. Its pathway is lipid metabolism; C21-steroid hormone metabolism. The protein operates within steroid metabolism; cholesterol metabolism. Its function is as follows. A cytochrome P450 monooxygenase that catalyzes the side-chain hydroxylation and cleavage of cholesterol to pregnenolone, the precursor of most steroid hormones. Catalyzes three sequential oxidation reactions of cholesterol, namely the hydroxylation at C22 followed with the hydroxylation at C20 to yield 20R,22R-hydroxycholesterol that is further cleaved between C20 and C22 to yield the C21-steroid pregnenolone and 4-methylpentanal. Mechanistically, uses molecular oxygen inserting one oxygen atom into a substrate and reducing the second into a water molecule. Two electrons are provided by NADPH via a two-protein mitochondrial transfer system comprising flavoprotein FDXR (adrenodoxin/ferredoxin reductase) and nonheme iron-sulfur protein FDX1 or FDX2 (adrenodoxin/ferredoxin). This is Cholesterol side-chain cleavage enzyme, mitochondrial (CYP11A1) from Bos taurus (Bovine).